Consider the following 376-residue polypeptide: Putative glutamate--cysteine ligase 2 (376 aa).

This sequence belongs to the glutamate--cysteine ligase type 2 family. YbdK subfamily.

The catalysed reaction is L-cysteine + L-glutamate + ATP = gamma-L-glutamyl-L-cysteine + ADP + phosphate + H(+). In terms of biological role, ATP-dependent carboxylate-amine ligase which exhibits weak glutamate--cysteine ligase activity. The polypeptide is Putative glutamate--cysteine ligase 2 (Corynebacterium glutamicum (strain R)).